The sequence spans 474 residues: Glutamine synthetase (474 aa).

A GS beta-grasp domain is found at 15-99; sequence EDVQFIDVRF…MTFFIHDPIT (85 aa). In terms of domain architecture, GS catalytic spans 107-474; sequence PRNIAKKAET…PYEFTLYYDI (368 aa). Residues glutamate 132 and glutamate 134 each coordinate Mg(2+). Residue glutamate 210 participates in ATP binding. Mg(2+) is bound by residues glutamate 215 and glutamate 223. L-glutamate is bound by residues 267–268 and glycine 268; that span reads NG. Histidine 272 serves as a coordination point for Mg(2+). ATP contacts are provided by residues 274 to 276 and serine 276; that span reads HSS. 3 residues coordinate L-glutamate: arginine 325, glutamate 331, and arginine 343. Arginine 343, arginine 348, and lysine 357 together coordinate ATP. Position 362 (glutamate 362) interacts with Mg(2+). L-glutamate is bound at residue arginine 364. An O-AMP-tyrosine modification is found at tyrosine 402.

The protein belongs to the glutamine synthetase family. As to quaternary structure, oligomer of 12 subunits arranged in the form of two hexagons. It depends on Mg(2+) as a cofactor.

Its subcellular location is the cytoplasm. It carries out the reaction L-glutamate + NH4(+) + ATP = L-glutamine + ADP + phosphate + H(+). Its activity is regulated as follows. The activity of this enzyme could be controlled by adenylation under conditions of abundant glutamine. Functionally, catalyzes the ATP-dependent biosynthesis of glutamine from glutamate and ammonia. The polypeptide is Glutamine synthetase (Frankia alni).